The chain runs to 70 residues: Translation initiation factor IF-1 (70 aa).

In terms of domain architecture, S1-like spans 1–70 (MKNDKLFLTG…LKLGRITQRK (70 aa)).

The protein belongs to the IF-1 family. Component of the 30S ribosomal translation pre-initiation complex which assembles on the 30S ribosome in the order IF-2 and IF-3, IF-1 and N-formylmethionyl-tRNA(fMet); mRNA recruitment can occur at any time during PIC assembly.

The protein resides in the cytoplasm. One of the essential components for the initiation of protein synthesis. Stabilizes the binding of IF-2 and IF-3 on the 30S subunit to which N-formylmethionyl-tRNA(fMet) subsequently binds. Helps modulate mRNA selection, yielding the 30S pre-initiation complex (PIC). Upon addition of the 50S ribosomal subunit IF-1, IF-2 and IF-3 are released leaving the mature 70S translation initiation complex. The protein is Translation initiation factor IF-1 of Mycoplasma genitalium (strain ATCC 33530 / DSM 19775 / NCTC 10195 / G37) (Mycoplasmoides genitalium).